Reading from the N-terminus, the 245-residue chain is 1-(5-phosphoribosyl)-5-[(5-phosphoribosylamino)methylideneamino] imidazole-4-carboxamide isomerase (245 aa).

Asp-7 (proton acceptor) is an active-site residue. Asp-129 acts as the Proton donor in catalysis.

This sequence belongs to the HisA/HisF family.

It localises to the cytoplasm. The catalysed reaction is 1-(5-phospho-beta-D-ribosyl)-5-[(5-phospho-beta-D-ribosylamino)methylideneamino]imidazole-4-carboxamide = 5-[(5-phospho-1-deoxy-D-ribulos-1-ylimino)methylamino]-1-(5-phospho-beta-D-ribosyl)imidazole-4-carboxamide. Its pathway is amino-acid biosynthesis; L-histidine biosynthesis; L-histidine from 5-phospho-alpha-D-ribose 1-diphosphate: step 4/9. The polypeptide is 1-(5-phosphoribosyl)-5-[(5-phosphoribosylamino)methylideneamino] imidazole-4-carboxamide isomerase (Erwinia tasmaniensis (strain DSM 17950 / CFBP 7177 / CIP 109463 / NCPPB 4357 / Et1/99)).